An 830-amino-acid polypeptide reads, in one-letter code: GPI ethanolamine phosphate transferase 2 (830 aa).

The N-terminal stretch at 1–32 (MNLKQFTCLSCAQLLAILLFIFAFFPRKIVLT) is a signal peptide. The Lumenal portion of the chain corresponds to 33-321 (GISKQDPDQD…QYLETVQQID (289 aa)). N-linked (GlcNAc...) asparagine glycosylation is found at N145, N185, and N298. A helical transmembrane segment spans residues 322 to 342 (IVPTIAALFGMPIPMNSVGII). Topologically, residues 343–405 (IPDFLQLLPN…TKSATNYNYP (63 aa)) are cytoplasmic. The helical transmembrane segment at 406-426 (LLTLAFVGFLIITIIAIYVLL) threads the bilayer. Residues 427 to 439 (RYSGPDFWQLRVS) are Lumenal-facing. A helical membrane pass occupies residues 440-460 (SLSVLLVSIILGVSTFASSFI). Topologically, residues 461–469 (EEEHQLWWW) are cytoplasmic. Residues 470 to 490 (IVTAFSAVPLFVYRLNVLIIV) traverse the membrane as a helical segment. Over 491 to 533 (RWFIMMACVRSIKFWNNSGQKFIYSNVMSNLLNQNPSWKWCLN) the chain is Lumenal. The N-linked (GlcNAc...) asparagine glycan is linked to N506. A helical membrane pass occupies residues 534 to 554 (MLTFLVLIMASAGFQVLHFIV). At 555 to 598 (TTILVGLCFTYKISWEIVNGNQAEIPLFMHDLLAKIDFAPTESN) the chain is on the cytoplasmic side. Residues 599 to 619 (LIVLARVFFQAWAIVVISRLV) traverse the membrane as a helical segment. The Lumenal segment spans residues 620–651 (LTKLKVLNKNYLIKDMKVYITILLMFQTSSQN). The chain crosses the membrane as a helical span at residues 652 to 672 (IGQFLVFQILESQIFYFFQNI). Residues 673 to 682 (PTASLTSTSK) lie on the Cytoplasmic side of the membrane. A helical transmembrane segment spans residues 683–703 (IYFSNLVSLILQNFTFFQFGG). Residues 704–724 (TNSISTIDLGNAYHGVSSDYN) are Lumenal-facing. Residues 725-745 (IYVVGILMSVANFAPAIYWSM) traverse the membrane as a helical segment. The Cytoplasmic portion of the chain corresponds to 746-768 (LPWSINYASIPAQVKLQTFIRSK). Residues 769-789 (LPAFTYHCIFGTCLMTACVVL) form a helical membrane-spanning segment. Residues 790 to 805 (RFHLFIWSVFSPKLCY) lie on the Lumenal side of the membrane. Residues 806–826 (FLGWNFVMGLLNGWLPELALL) traverse the membrane as a helical segment. The Cytoplasmic portion of the chain corresponds to 827–830 (CALD).

This sequence belongs to the PIGG/PIGN/PIGO family. PIGG subfamily. In terms of processing, N-glycosylated.

The protein localises to the endoplasmic reticulum membrane. Its pathway is glycolipid biosynthesis; glycosylphosphatidylinositol-anchor biosynthesis. Its function is as follows. Ethanolamine phosphate transferase involved in glycosylphosphatidylinositol-anchor biosynthesis. Transfers ethanolamine phosphate to the GPI second mannose. Although not essential, addition of ethanolamine phosphate to the second mannose plays an important role in cell separation via the GPI-based modification of daughter-specific proteins. The sequence is that of GPI ethanolamine phosphate transferase 2 (LAS21) from Saccharomyces cerevisiae (strain ATCC 204508 / S288c) (Baker's yeast).